The primary structure comprises 310 residues: Homoserine kinase (310 aa).

91–101 (PIGSGLGSSAC) provides a ligand contact to ATP.

This sequence belongs to the GHMP kinase family. Homoserine kinase subfamily.

It localises to the cytoplasm. The catalysed reaction is L-homoserine + ATP = O-phospho-L-homoserine + ADP + H(+). It participates in amino-acid biosynthesis; L-threonine biosynthesis; L-threonine from L-aspartate: step 4/5. Functionally, catalyzes the ATP-dependent phosphorylation of L-homoserine to L-homoserine phosphate. The protein is Homoserine kinase of Escherichia coli O6:H1 (strain CFT073 / ATCC 700928 / UPEC).